Consider the following 309-residue polypeptide: Tagatose-6-phosphate kinase (309 aa).

Belongs to the carbohydrate kinase PfkB family. LacC subfamily.

The enzyme catalyses D-tagatofuranose 6-phosphate + ATP = D-tagatofuranose 1,6-bisphosphate + ADP + H(+). The protein operates within carbohydrate metabolism; D-tagatose 6-phosphate degradation; D-glyceraldehyde 3-phosphate and glycerone phosphate from D-tagatose 6-phosphate: step 1/2. This Streptococcus pyogenes serotype M5 (strain Manfredo) protein is Tagatose-6-phosphate kinase.